The chain runs to 362 residues: Bifunctional chorismate mutase/prephenate dehydratase (362 aa).

Residues 3-91 enclose the Chorismate mutase domain; it reads QTIDELLIPH…ECLAVERPLT (89 aa). Residues Arg-13, Arg-30, Lys-41, and Glu-52 each contribute to the substrate site. The region spanning 92–269 is the Prephenate dehydratase domain; that stretch reads IAYLGPQGTF…NTTRFLVMGH (178 aa). In terms of domain architecture, ACT spans 281–356; sequence SLAVSAPNRA…RASFVKAIGS (76 aa).

The protein localises to the cytoplasm. The enzyme catalyses chorismate = prephenate. It catalyses the reaction prephenate + H(+) = 3-phenylpyruvate + CO2 + H2O. The protein operates within amino-acid biosynthesis; L-phenylalanine biosynthesis; phenylpyruvate from prephenate: step 1/1. It participates in metabolic intermediate biosynthesis; prephenate biosynthesis; prephenate from chorismate: step 1/1. In terms of biological role, catalyzes the Claisen rearrangement of chorismate to prephenate and the decarboxylation/dehydration of prephenate to phenylpyruvate. This Neisseria gonorrhoeae (strain ATCC 700825 / FA 1090) protein is Bifunctional chorismate mutase/prephenate dehydratase (pheA).